Consider the following 378-residue polypeptide: Succinyl-diaminopimelate desuccinylase (378 aa).

Residue His-77 participates in Zn(2+) binding. The active site involves Asp-79. Asp-108 contributes to the Zn(2+) binding site. Glu-138 acts as the Proton acceptor in catalysis. 3 residues coordinate Zn(2+): Glu-139, Glu-167, and His-350.

This sequence belongs to the peptidase M20A family. DapE subfamily. As to quaternary structure, homodimer. Zn(2+) is required as a cofactor. The cofactor is Co(2+).

The enzyme catalyses N-succinyl-(2S,6S)-2,6-diaminopimelate + H2O = (2S,6S)-2,6-diaminopimelate + succinate. It participates in amino-acid biosynthesis; L-lysine biosynthesis via DAP pathway; LL-2,6-diaminopimelate from (S)-tetrahydrodipicolinate (succinylase route): step 3/3. Its function is as follows. Catalyzes the hydrolysis of N-succinyl-L,L-diaminopimelic acid (SDAP), forming succinate and LL-2,6-diaminopimelate (DAP), an intermediate involved in the bacterial biosynthesis of lysine and meso-diaminopimelic acid, an essential component of bacterial cell walls. This chain is Succinyl-diaminopimelate desuccinylase, found in Erythrobacter litoralis (strain HTCC2594).